Reading from the N-terminus, the 100-residue chain is Chorion class A protein M2774 (100 aa).

The left arm stretch occupies residues 1 to 33; it reads GGGWNGWNGLGGGWNGLGVGWSRLDGGYGGGCG. A central domain region spans residues 34–81; the sequence is SYGGEGIGNVGVADELPVGGVTAVGGRVPIIGGVEYGGPARAAGAVSI. A right arm region spans residues 82–100; sequence CGHCAPTCGCGRAGLGGYY.

This sequence belongs to the chorion protein family.

In terms of biological role, this protein is one of many from the eggshell of the silk moth. The protein is Chorion class A protein M2774 of Bombyx mori (Silk moth).